The chain runs to 223 residues: UPF0758 protein Plut_0598 (223 aa).

In terms of domain architecture, MPN spans 100 to 222 (RVQGAKDVFE…WFSFRESNLL (123 aa)). The Zn(2+) site is built by His171, His173, and Asp184. A JAMM motif motif is present at residues 171-184 (HNHPSGDTEPSNAD).

Belongs to the UPF0758 family.

This is UPF0758 protein Plut_0598 from Chlorobium luteolum (strain DSM 273 / BCRC 81028 / 2530) (Pelodictyon luteolum).